Here is a 151-residue protein sequence, read N- to C-terminus: Transcriptional repressor NrdR (151 aa).

The segment at 3-34 is a zinc-finger region; sequence CPYCGSLDNKVIDSRLSRDDTETRRRRECLEC. The ATP-cone domain occupies 49–139; the sequence is LMIVKKDGRR…VYREFKDVHD (91 aa).

The protein belongs to the NrdR family. Requires Zn(2+) as cofactor.

Its function is as follows. Negatively regulates transcription of bacterial ribonucleotide reductase nrd genes and operons by binding to NrdR-boxes. The polypeptide is Transcriptional repressor NrdR (Desulfosudis oleivorans (strain DSM 6200 / JCM 39069 / Hxd3) (Desulfococcus oleovorans)).